The sequence spans 155 residues: Ribosome maturation factor RimP (155 aa).

This sequence belongs to the RimP family.

It localises to the cytoplasm. Its function is as follows. Required for maturation of 30S ribosomal subunits. The polypeptide is Ribosome maturation factor RimP (Staphylococcus epidermidis (strain ATCC 35984 / DSM 28319 / BCRC 17069 / CCUG 31568 / BM 3577 / RP62A)).